A 373-amino-acid chain; its full sequence is Probable pectin lyase C (373 aa).

The N-terminal stretch at 1–17 (MKKYLLSLLAAVTYTTA) is a signal peptide. Cystine bridges form between Cys-78–Cys-95 and Cys-87–Cys-215. N-linked (GlcNAc...) asparagine glycosylation is found at Asn-140 and Asn-229. Residue Arg-245 is part of the active site. Cys-315 and Cys-323 are disulfide-bonded.

This sequence belongs to the polysaccharide lyase 1 family.

It is found in the secreted. The enzyme catalyses Eliminative cleavage of (1-&gt;4)-alpha-D-galacturonan methyl ester to give oligosaccharides with 4-deoxy-6-O-methyl-alpha-D-galact-4-enuronosyl groups at their non-reducing ends.. Its function is as follows. Pectinolytic enzymes consist of four classes of enzymes: pectin lyase, polygalacturonase, pectin methylesterase and rhamnogalacturonase. Among pectinolytic enzymes, pectin lyase is the most important in depolymerization of pectin, since it cleaves internal glycosidic bonds of highly methylated pectins. The polypeptide is Probable pectin lyase C (pelC) (Emericella nidulans (strain FGSC A4 / ATCC 38163 / CBS 112.46 / NRRL 194 / M139) (Aspergillus nidulans)).